Consider the following 422-residue polypeptide: MGPVWLWLLIAELLLPVHYQPSSAHGDKSLGAPQPASHQSLEPAPAYHKVTPTITNFALRLYKQLAEEIPGNILFSPVSLSSTVALLSLGAHADTQAQILQSLGFNLTETPAADIHRGFQSLLHTLDLPSPKLELKLGHSLFLDRQLKPQQRFLDSAKELYGALAFSANFTEAAATGQQINDLVRKQTYGQVVGCLPEFDRDTLMVLLNYIFFKAKWKHPFDRYQTRKQESFFVDQRLQLRIPMMRQKEMHRFLYDQEASCTVLQIEYSGTALLLLVLPDPGKMQQVEAALQPETLRRWGQRFLPSLLDLHLPRFSVSATYNLEEILPLVGLSSLFDVEADLSGIMGQLNKTVSRVSHKAVVDMNEKGTEAAAASGLLSQPPSLNMTSAPHAHFNRPFLLLLWEVTTQSLLFLGKVVNPAAG.

The first 24 residues, 1–24 (MGPVWLWLLIAELLLPVHYQPSSA), serve as a signal peptide directing secretion. Residues 25-45 (HGDKSLGAPQPASHQSLEPAP) are disordered. N-linked (GlcNAc...) asparagine glycans are attached at residues asparagine 106, asparagine 169, asparagine 350, and asparagine 385.

This sequence belongs to the serpin family.

It is found in the secreted. The polypeptide is Serpin A11 (Serpina11) (Rattus norvegicus (Rat)).